We begin with the raw amino-acid sequence, 579 residues long: Protein downstream neighbor of son homolog (579 aa).

2 disordered regions span residues 1 to 68 (MAEL…RRNP) and 331 to 379 (FSQP…DESF). Residues 339-348 (DTGKKQKKPE) are compositionally biased toward basic and acidic residues. The segment covering 365-378 (EADEASDESDEDES) has biased composition (acidic residues).

The protein belongs to the DONSON family. Component of the replisome complex.

It localises to the nucleus. Functionally, replisome component that maintains genome stability by protecting stalled or damaged replication forks. After the induction of replication stress, required for the stabilization of stalled replication forks, the efficient activation of the intra-S-phase and G/2M cell-cycle checkpoints and the maintenance of genome stability. In Xenopus laevis (African clawed frog), this protein is Protein downstream neighbor of son homolog.